Consider the following 228-residue polypeptide: Sodium channel regulatory subunit beta-4 (228 aa).

A signal peptide spans 1 to 30; the sequence is MSRAGNRGNTQARWLGTGLLGLFLLPMYLS. Residues 31-148 form the Ig-like C2-type domain; it reads LEVSVGKATT…KDLNNSATIF (118 aa). Topologically, residues 31–161 are extracellular; sequence LEVSVGKATT…VDKLEKVDNT (131 aa). 4 N-linked (GlcNAc...) asparagine glycosylation sites follow: Asn-45, Asn-71, Asn-113, and Asn-142. The cysteines at positions 53 and 131 are disulfide-linked. The helical transmembrane segment at 162-182 threads the bilayer; it reads VTLIILAVVGGVIGLLVCILL. Over 183–228 the chain is Cytoplasmic; sequence LKKLITFILKKTREKKKECLVSSSGNDNTENGLPGSKAEEKPPTKV. Positions 199–228 are disordered; it reads KECLVSSSGNDNTENGLPGSKAEEKPPTKV. Residues 203-213 show a composition bias toward polar residues; that stretch reads VSSSGNDNTEN. Residues 219–228 show a composition bias toward basic and acidic residues; it reads KAEEKPPTKV.

The protein belongs to the sodium channel auxiliary subunit SCN4B (TC 8.A.17) family. As to quaternary structure, a voltage-gated sodium (Nav) channel consists of an ion-conducting pore-forming alpha subunit functional on its own that is regulated by one or more beta subunits. The beta subunit SCN4B is disulfide-linked to the pore-forming alpha subunit. Interacts with SCN1A; regulatory subunit of SCN1A/Nav1.1. Interacts with SCN2A; regulatory subunit of SCN2A/Nav1.2. Contains an interchain disulfide bond with SCN2A.

Its subcellular location is the cell membrane. In terms of biological role, regulatory subunit of multiple voltage-gated sodium (Nav) channels directly mediating the depolarization of excitable membranes. Navs, also called VGSCs (voltage-gated sodium channels) or VDSCs (voltage-dependent sodium channels), operate by switching between closed and open conformations depending on the voltage difference across the membrane. In the open conformation they allow Na(+) ions to selectively pass through the pore, along their electrochemical gradient. The influx of Na+ ions provokes membrane depolarization, initiating the propagation of electrical signals throughout cells and tissues. The accessory beta subunits participate in localization and functional modulation of the Nav channels. Modulates the activity of SCN1A/Nav1.1. Modulates the activity of SCN2A/Nav1.2. This Mus musculus (Mouse) protein is Sodium channel regulatory subunit beta-4.